The primary structure comprises 330 residues: Aspartate--ammonia ligase (330 aa).

Belongs to the class-II aminoacyl-tRNA synthetase family. AsnA subfamily. As to quaternary structure, homodimer.

The protein resides in the cytoplasm. It carries out the reaction L-aspartate + NH4(+) + ATP = L-asparagine + AMP + diphosphate + H(+). It participates in amino-acid biosynthesis; L-asparagine biosynthesis; L-asparagine from L-aspartate (ammonia route): step 1/1. This is Aspartate--ammonia ligase from Salmonella typhi.